A 183-amino-acid polypeptide reads, in one-letter code: MASSMLSNAAMATTAATAGAQASMVAPFNGLKSFATFPITKKSSNDFSSLPSNGGRVQCMQVWPPVGKKKFETLSYLPPLSDAQLLAQVQYLLNKGWIPCIEFELEHPFVYRENHRSPGYQDGRYWTMWKLPMYGCTDPAQVLNEVEEAKKAYPSAFIRIIGFDNKRQVQCVSFIAYKPAGGL.

Residues 1–58 (MASSMLSNAAMATTAATAGAQASMVAPFNGLKSFATFPITKKSSNDFSSLPSNGGRVQ) constitute a chloroplast transit peptide.

Belongs to the RuBisCO small chain family. As to quaternary structure, heterohexadecamer of 8 large and 8 small subunits.

The protein localises to the plastid. It localises to the chloroplast. Functionally, ruBisCO catalyzes two reactions: the carboxylation of D-ribulose 1,5-bisphosphate, the primary event in carbon dioxide fixation, as well as the oxidative fragmentation of the pentose substrate. Both reactions occur simultaneously and in competition at the same active site. Although the small subunit is not catalytic it is essential for maximal activity. This Amaranthus hypochondriacus (Prince-of-Wales feather) protein is Ribulose bisphosphate carboxylase small subunit, chloroplastic 1.